The chain runs to 430 residues: Enolase (430 aa).

Gln-163 serves as a coordination point for (2R)-2-phosphoglycerate. Glu-205 acts as the Proton donor in catalysis. Positions 242, 287, and 314 each coordinate Mg(2+). (2R)-2-phosphoglycerate contacts are provided by Lys-339, Arg-368, Ser-369, and Lys-390. Lys-339 functions as the Proton acceptor in the catalytic mechanism.

The protein belongs to the enolase family. Requires Mg(2+) as cofactor.

Its subcellular location is the cytoplasm. The protein resides in the secreted. The protein localises to the cell surface. The enzyme catalyses (2R)-2-phosphoglycerate = phosphoenolpyruvate + H2O. The protein operates within carbohydrate degradation; glycolysis; pyruvate from D-glyceraldehyde 3-phosphate: step 4/5. Functionally, catalyzes the reversible conversion of 2-phosphoglycerate (2-PG) into phosphoenolpyruvate (PEP). It is essential for the degradation of carbohydrates via glycolysis. In Listeria innocua serovar 6a (strain ATCC BAA-680 / CLIP 11262), this protein is Enolase.